A 784-amino-acid polypeptide reads, in one-letter code: Lon protease (784 aa).

Residues 11–204 enclose the Lon N-terminal domain; it reads IPVLPLRDVV…YLMAMMESEI (194 aa). 356–363 contributes to the ATP binding site; that stretch reads GPPGVGKT. Positions 592-773 constitute a Lon proteolytic domain; it reads ENRVGQVTGL…EEVLTLALQN (182 aa). Active-site residues include serine 679 and lysine 722.

This sequence belongs to the peptidase S16 family. As to quaternary structure, homohexamer. Organized in a ring with a central cavity. ATP binding and hydrolysis do not affect the oligomeric state of the enzyme.

The protein resides in the cytoplasm. It carries out the reaction Hydrolysis of proteins in presence of ATP.. Its activity is regulated as follows. Contains an allosteric site (distinct from its active site), whose occupancy by an unfolded polypeptide leads to enzyme activation. In terms of biological role, ATP-dependent serine protease that mediates the selective degradation of mutant and abnormal proteins as well as certain short-lived regulatory proteins. Required for cellular homeostasis and for survival from DNA damage and developmental changes induced by stress. Degrades polypeptides processively to yield small peptide fragments that are 5 to 10 amino acids long. Binds to DNA in a double-stranded, site-specific manner. Endogenous substrates include the regulatory proteins RcsA and SulA, the transcriptional activator SoxS, and UmuD. Its overproduction specifically inhibits translation through at least two different pathways, one of them being the YoeB-YefM toxin-antitoxin system. The sequence is that of Lon protease from Escherichia coli O6:H1 (strain CFT073 / ATCC 700928 / UPEC).